We begin with the raw amino-acid sequence, 163 residues long: Disulfide bond formation protein B (163 aa).

The Cytoplasmic segment spans residues 1–9 (MRLASPRSL). Residues 10–26 (FVIAFLGSALLIAIALY) form a helical membrane-spanning segment. The Periplasmic segment spans residues 27–44 (MEHVMGLAPCPLCIVQRI). A disulfide bond links cysteine 36 and cysteine 39. Residues 45 to 61 (CVIGFGLVCLVAAIHGP) traverse the membrane as a helical segment. At 62–67 (AKVGRR) the chain is on the cytoplasmic side. Residues 68 to 85 (VYAAIAALFVAAGAATAI) traverse the membrane as a helical segment. Over 86–142 (RQIWLQSVPADQLPSCLPSLEYMMEALPFQEIARLVLHGTAECAEVSWTMLGMSIPE) the chain is Periplasmic. Cysteines 101 and 128 form a disulfide. A helical membrane pass occupies residues 143-161 (WSLLGFIGMAIVCLWQLLR). The Cytoplasmic segment spans residues 162–163 (RD).

It belongs to the DsbB family.

Its subcellular location is the cell inner membrane. In terms of biological role, required for disulfide bond formation in some periplasmic proteins. Acts by oxidizing the DsbA protein. This Stutzerimonas stutzeri (strain A1501) (Pseudomonas stutzeri) protein is Disulfide bond formation protein B.